The sequence spans 411 residues: Multifunctional CCA protein (411 aa).

ATP contacts are provided by glycine 8 and arginine 11. CTP-binding residues include glycine 8 and arginine 11. Mg(2+) is bound by residues aspartate 21 and aspartate 23. ATP is bound by residues arginine 91, arginine 137, and arginine 140. CTP-binding residues include arginine 91, arginine 137, and arginine 140. An HD domain is found at 228-333 (SGVHTLLVIE…LKVFNALDIW (106 aa)).

Belongs to the tRNA nucleotidyltransferase/poly(A) polymerase family. Bacterial CCA-adding enzyme type 1 subfamily. Monomer. Can also form homodimers and oligomers. It depends on Mg(2+) as a cofactor. The cofactor is Ni(2+).

The enzyme catalyses a tRNA precursor + 2 CTP + ATP = a tRNA with a 3' CCA end + 3 diphosphate. It catalyses the reaction a tRNA with a 3' CCA end + 2 CTP + ATP = a tRNA with a 3' CCACCA end + 3 diphosphate. In terms of biological role, catalyzes the addition and repair of the essential 3'-terminal CCA sequence in tRNAs without using a nucleic acid template. Adds these three nucleotides in the order of C, C, and A to the tRNA nucleotide-73, using CTP and ATP as substrates and producing inorganic pyrophosphate. tRNA 3'-terminal CCA addition is required both for tRNA processing and repair. Also involved in tRNA surveillance by mediating tandem CCA addition to generate a CCACCA at the 3' terminus of unstable tRNAs. While stable tRNAs receive only 3'-terminal CCA, unstable tRNAs are marked with CCACCA and rapidly degraded. The chain is Multifunctional CCA protein from Actinobacillus pleuropneumoniae serotype 5b (strain L20).